We begin with the raw amino-acid sequence, 315 residues long: UDP-3-O-acyl-N-acetylglucosamine deacetylase (315 aa).

The Zn(2+) site is built by His-78, His-235, and Asp-239. His-262 acts as the Proton donor in catalysis.

Belongs to the LpxC family. Zn(2+) is required as a cofactor.

It carries out the reaction a UDP-3-O-[(3R)-3-hydroxyacyl]-N-acetyl-alpha-D-glucosamine + H2O = a UDP-3-O-[(3R)-3-hydroxyacyl]-alpha-D-glucosamine + acetate. It participates in glycolipid biosynthesis; lipid IV(A) biosynthesis; lipid IV(A) from (3R)-3-hydroxytetradecanoyl-[acyl-carrier-protein] and UDP-N-acetyl-alpha-D-glucosamine: step 2/6. Its function is as follows. Catalyzes the hydrolysis of UDP-3-O-myristoyl-N-acetylglucosamine to form UDP-3-O-myristoylglucosamine and acetate, the committed step in lipid A biosynthesis. This Syntrophus aciditrophicus (strain SB) protein is UDP-3-O-acyl-N-acetylglucosamine deacetylase.